We begin with the raw amino-acid sequence, 188 residues long: Elongation factor P (188 aa).

Lysine 34 is subject to N6-(3,6-diaminohexanoyl)-5-hydroxylysine.

The protein belongs to the elongation factor P family. In terms of processing, is beta-lysylated on the epsilon-amino group of Lys-34 by the combined action of EpmA and EpmB, and then hydroxylated on the C5 position of the same residue by EpmC. Lysylation is critical for the stimulatory effect of EF-P on peptide-bond formation. The lysylation moiety would extend toward the peptidyltransferase center and stabilize the terminal 3-CCA end of the tRNA. The hydroxylation of the C5 position on Lys-34 would allow additional potential stabilizing hydrogen-bond interactions with the P-tRNA.

It localises to the cytoplasm. The protein operates within protein biosynthesis; polypeptide chain elongation. Involved in peptide bond synthesis. Alleviates ribosome stalling that occurs when 3 or more consecutive Pro residues or the sequence PPG is present in a protein, possibly by augmenting the peptidyl transferase activity of the ribosome. Modification of Lys-34 is required for alleviation. This Shigella boydii serotype 18 (strain CDC 3083-94 / BS512) protein is Elongation factor P.